We begin with the raw amino-acid sequence, 195 residues long: Recombination protein RecR (195 aa).

The segment at 54 to 69 (CTICGSYTEDEICSIC) adopts a C4-type zinc-finger fold. Positions 77–172 (ATICVVGFPQ…NITRLASGLP (96 aa)) constitute a Toprim domain.

Belongs to the RecR family.

May play a role in DNA repair. It seems to be involved in an RecBC-independent recombinational process of DNA repair. It may act with RecF and RecO. The polypeptide is Recombination protein RecR (Treponema denticola (strain ATCC 35405 / DSM 14222 / CIP 103919 / JCM 8153 / KCTC 15104)).